Here is a 217-residue protein sequence, read N- to C-terminus: Protein GrpE (217 aa).

This sequence belongs to the GrpE family. As to quaternary structure, homodimer.

It localises to the cytoplasm. In terms of biological role, participates actively in the response to hyperosmotic and heat shock by preventing the aggregation of stress-denatured proteins, in association with DnaK and GrpE. It is the nucleotide exchange factor for DnaK and may function as a thermosensor. Unfolded proteins bind initially to DnaJ; upon interaction with the DnaJ-bound protein, DnaK hydrolyzes its bound ATP, resulting in the formation of a stable complex. GrpE releases ADP from DnaK; ATP binding to DnaK triggers the release of the substrate protein, thus completing the reaction cycle. Several rounds of ATP-dependent interactions between DnaJ, DnaK and GrpE are required for fully efficient folding. The protein is Protein GrpE of Mycoplasma pneumoniae (strain ATCC 29342 / M129 / Subtype 1) (Mycoplasmoides pneumoniae).